The chain runs to 102 residues: Co-chaperonin GroES (102 aa).

It belongs to the GroES chaperonin family. Heptamer of 7 subunits arranged in a ring. Interacts with the chaperonin GroEL.

It is found in the cytoplasm. In terms of biological role, together with the chaperonin GroEL, plays an essential role in assisting protein folding. The GroEL-GroES system forms a nano-cage that allows encapsulation of the non-native substrate proteins and provides a physical environment optimized to promote and accelerate protein folding. GroES binds to the apical surface of the GroEL ring, thereby capping the opening of the GroEL channel. The sequence is that of Co-chaperonin GroES from Streptomyces griseus subsp. griseus (strain JCM 4626 / CBS 651.72 / NBRC 13350 / KCC S-0626 / ISP 5235).